The chain runs to 518 residues: Nif-specific regulatory protein (518 aa).

The region spanning Asn-35–Leu-176 is the GAF domain. The region spanning Val-205–Val-432 is the Sigma-54 factor interaction domain. ATP is bound by residues Gly-232 to Glu-239 and Ala-295 to Glu-304. Residues Met-433 to Glu-475 form an inter-domain linker region. Positions Arg-476–Ile-518 are C-terminal DNA-binding domain. The segment at residues Gln-490 to Gln-509 is a DNA-binding region (H-T-H motif).

As to quaternary structure, interacts with sigma-54.

Functionally, required for activation of most nif operons, which are directly involved in nitrogen fixation. This Enterobacter agglomerans (Erwinia herbicola) protein is Nif-specific regulatory protein (nifA).